We begin with the raw amino-acid sequence, 240 residues long: MSFERLQRDLHEAIEGVNRYNPENVAELAACVQAMVAENKYDKDIVLTILKLYQLNPERYDENVVRQVLLKTLMVLPSSDFALAKCLIDTNRIGSQELRRIFDLGAVLESCNFAVFWKLMKGTYKPTTNPNEPFKVPAEISKMIKPMAGFEDAIKHYACRVISVTFQNIEKKLLSSLLGGASDKEVTALAKKFGWETKENGEVFFVANHEGTIKTRNIDEKIQFSHVADLLTSNVPPLAF.

Residues 41–221 enclose the PCI domain; sequence YDKDIVLTIL…TIKTRNIDEK (181 aa).

Belongs to the eIF-3 subunit K family. Component of the eukaryotic translation initiation factor 3 (eIF-3) complex.

Its subcellular location is the cytoplasm. Component of the eukaryotic translation initiation factor 3 (eIF-3) complex, which is involved in protein synthesis of a specialized repertoire of mRNAs and, together with other initiation factors, stimulates binding of mRNA and methionyl-tRNAi to the 40S ribosome. The eIF-3 complex specifically targets and initiates translation of a subset of mRNAs involved in cell proliferation. The protein is Eukaryotic translation initiation factor 3 subunit K of Caenorhabditis briggsae.